Here is a 124-residue protein sequence, read N- to C-terminus: Protein CYSTEINE-RICH TRANSMEMBRANE MODULE 10 (124 aa).

The segment at 1-103 is disordered; sequence MSYQDPQHPV…PKNKKDKKDS (103 aa). Composition is skewed to pro residues over residues 27 to 40 and 65 to 88; these read AGYPPPAGYPPPQY and GYPPPQYPQGHPPQYPYQGPPPPH. The helical transmembrane segment at 101–118 threads the bilayer; that stretch reads KDSGGFMEGCLAMLCCCV.

The protein belongs to the CYSTM1 family. Heterodimers. Interacts with CYSTM7 and WIH1/CYSTM13. As to expression, mostly expressed in stems and,at low levels, in stems, roots, flowers, siliques and leaves.

Its subcellular location is the cell membrane. It is found in the cytoplasm. In terms of biological role, involved in resistance to abiotic stress. This chain is Protein CYSTEINE-RICH TRANSMEMBRANE MODULE 10, found in Arabidopsis thaliana (Mouse-ear cress).